The primary structure comprises 150 residues: Phosphoribosyl-AMP cyclohydrolase (150 aa).

Residue aspartate 92 coordinates Mg(2+). Cysteine 93 is a Zn(2+) binding site. Residues aspartate 94 and aspartate 96 each coordinate Mg(2+). Zn(2+) contacts are provided by cysteine 111 and cysteine 118.

This sequence belongs to the PRA-CH family. Homodimer. It depends on Mg(2+) as a cofactor. The cofactor is Zn(2+).

The protein localises to the cytoplasm. The enzyme catalyses 1-(5-phospho-beta-D-ribosyl)-5'-AMP + H2O = 1-(5-phospho-beta-D-ribosyl)-5-[(5-phospho-beta-D-ribosylamino)methylideneamino]imidazole-4-carboxamide. It participates in amino-acid biosynthesis; L-histidine biosynthesis; L-histidine from 5-phospho-alpha-D-ribose 1-diphosphate: step 3/9. In terms of biological role, catalyzes the hydrolysis of the adenine ring of phosphoribosyl-AMP. This Agrobacterium fabrum (strain C58 / ATCC 33970) (Agrobacterium tumefaciens (strain C58)) protein is Phosphoribosyl-AMP cyclohydrolase.